A 300-amino-acid polypeptide reads, in one-letter code: Putative S-adenosyl-L-methionine-dependent methyltransferase Mkms_0379 (300 aa).

Residues aspartate 128 and 157 to 158 (DL) contribute to the S-adenosyl-L-methionine site.

This sequence belongs to the UPF0677 family.

In terms of biological role, exhibits S-adenosyl-L-methionine-dependent methyltransferase activity. The protein is Putative S-adenosyl-L-methionine-dependent methyltransferase Mkms_0379 of Mycobacterium sp. (strain KMS).